A 1193-amino-acid chain; its full sequence is Magnesium-chelatase subunit H (1193 aa).

This sequence belongs to the Mg-chelatase subunit H family.

It carries out the reaction protoporphyrin IX + Mg(2+) + ATP + H2O = Mg-protoporphyrin IX + ADP + phosphate + 3 H(+). It functions in the pathway porphyrin-containing compound metabolism; bacteriochlorophyll biosynthesis (light-independent). In terms of biological role, involved in bacteriochlorophyll pigment biosynthesis; introduces a magnesium ion into protoporphyrin IX to yield Mg-protoroporphyrin IX. The polypeptide is Magnesium-chelatase subunit H (bchH) (Cereibacter sphaeroides (strain ATCC 17023 / DSM 158 / JCM 6121 / CCUG 31486 / LMG 2827 / NBRC 12203 / NCIMB 8253 / ATH 2.4.1.) (Rhodobacter sphaeroides)).